A 371-amino-acid chain; its full sequence is Polygalacturonase (371 aa).

The signal sequence occupies residues 1–19; it reads MPSYLRNLVWATLAAGLVS. The propeptide occupies 20–34; the sequence is AAPTPSRVSDLTKKS. A disulfide bridge links Cys38 with Cys53. PbH1 repeat units follow at residues 95 to 117, 165 to 195, 196 to 217, 218 to 238, 247 to 268, 276 to 298, and 310 to 355; these read GPLI…VINA, SDNL…DISE, STGV…AINS, GQNI…SIGS, VKNV…RIKT, VSDV…VIEQ, and TSGV…DITS. The Proton donor role is filled by Asp210. An intrachain disulfide couples Cys212 to Cys228. Residue His232 is part of the active site. An N-linked (GlcNAc...) asparagine glycan is attached at Asn249. 2 disulfides stabilise this stretch: Cys338–Cys343 and Cys362–Cys371.

Belongs to the glycosyl hydrolase 28 family.

The protein resides in the secreted. It carries out the reaction (1,4-alpha-D-galacturonosyl)n+m + H2O = (1,4-alpha-D-galacturonosyl)n + (1,4-alpha-D-galacturonosyl)m.. This is Polygalacturonase from Penicillium janthinellum (Penicillium vitale).